A 742-amino-acid chain; its full sequence is Cullin-2 (742 aa).

One can recognise a Cullin neddylation domain in the interval Asp-672–Asn-734. Residue Lys-686 forms a Glycyl lysine isopeptide (Lys-Gly) (interchain with G-Cter in NEDD8) linkage.

Belongs to the cullin family. In terms of assembly, interacts with SKIP17 and FBW2/SKIP18. Post-translationally, neddylated; which enhances the ubiquitination activity of E3 ubiquitin-protein ligase complexes.

In terms of biological role, core component of multiple SCF (SKP1-CUL1-F-box protein) E3 ubiquitin-protein ligase complexes. Involved in ubiquitination and subsequent proteasomal degradation of target proteins. The protein is Cullin-2 (CUL2) of Arabidopsis thaliana (Mouse-ear cress).